Consider the following 179-residue polypeptide: MSGGKYVDSEGHLYTVPIREQGNIYKPNNKAMADEVSEKQQVYDAHTKEIDLVNRDPKHLNDDVVKIDFEDVIAEPEGTHSFDGIWKASFTTFTVTKYWFYRLLSALFGIPMALIWGIYFAILSFLHIWAVVPCIKSFLIEIQCISRVYSIYVHTFCDPLFEAIGKVFSNIRINMQKEI.

S2 carries the post-translational modification N-acetylserine. The residue at position 2 (S2) is a Phosphoserine. The tract at residues 2-95 (SGGKYVDSEG…WKASFTTFTV (94 aa)) is required for homooligomerization. The Cytoplasmic portion of the chain corresponds to 2–105 (SGGKYVDSEG…TKYWFYRLLS (104 aa)). The residue at position 5 (K5) is an N6-acetyllysine; alternate. Residue K5 forms a Glycyl lysine isopeptide (Lys-Gly) (interchain with G-Cter in ubiquitin); alternate linkage. Y6 is subject to Phosphotyrosine. S9 bears the Phosphoserine mark. Phosphotyrosine; by ABL1 is present on Y14. Phosphotyrosine is present on Y25. Glycyl lysine isopeptide (Lys-Gly) (interchain with G-Cter in ubiquitin) cross-links involve residues K26 and K30. The residue at position 37 (S37) is a Phosphoserine. Residues K39, K48, and K58 each participate in a glycyl lysine isopeptide (Lys-Gly) (interchain with G-Cter in ubiquitin) cross-link. Residues 83–95 (DGIWKASFTTFTV) form an interaction with CAVIN3 region. Residues 106-126 (ALFGIPMALIWGIYFAILSFL) constitute an intramembrane region (helical). Over 127–179 (HIWAVVPCIKSFLIEIQCISRVYSIYVHTFCDPLFEAIGKVFSNIRINMQKEI) the chain is Cytoplasmic. Residues 132 to 143 (VPCIKSFLIEIQ) form an interacts with SPRY1, SPRY2, SPRY3 and SPRY4 region. Residues C134, C144, and C157 are each lipidated (S-palmitoyl cysteine). The segment at 150-161 (SIYVHTFCDPLF) is interacts with SPRY1, SPRY2, and SPRY4. An interacts with SPRY1, SPRY2, SPRY3 and SPRY4 region spans residues 168–179 (FSNIRINMQKEI).

This sequence belongs to the caveolin family. In terms of assembly, homooligomer. Interacts with GLIPR2. Interacts with NOSTRIN. Interacts with SNAP25 and STX1A. Interacts (via the N-terminus) with DPP4; the interaction is direct. Interacts with CTNNB1, CDH1 and JUP. Interacts with PACSIN2; this interaction induces membrane tubulation. Interacts with SLC7A9. Interacts with BMX and BTK. Interacts with TGFBR1. Interacts with CAVIN3 (via leucine-zipper domain) in a cholesterol-sensitive manner. Interacts with CAVIN1. Interacts with EHD2 in a cholesterol-dependent manner. Forms a ternary complex with UBXN6 and VCP; mediates CAV1 targeting to lysosomes for degradation. Interacts with ABCG1; this interaction regulates ABCG1-mediated cholesterol efflux. Interacts with NEU3; this interaction enhances NEU3 sialidase activity within caveola. Interacts (via C-terminus) with SPRY1, SPRY2 (via C-terminus), SPRY3, and SPRY4. Interacts with IGFBP5; this interaction allows trafficking of IGFBP5 from the plasma membrane to the nucleus. Post-translationally, phosphorylated at Tyr-14 by ABL1 in response to oxidative stress. Ubiquitinated. Undergo monoubiquitination and multi- and/or polyubiquitination. Monoubiquitination of N-terminal lysines promotes integration in a ternary complex with UBXN6 and VCP which promotes oligomeric CAV1 targeting to lysosomes for degradation. Ubiquitinated by ZNRF1; leading to degradation and modulation of the TLR4-mediated immune response.

It is found in the golgi apparatus membrane. Its subcellular location is the cell membrane. The protein resides in the membrane. The protein localises to the caveola. It localises to the membrane raft. In terms of biological role, may act as a scaffolding protein within caveolar membranes. Forms a stable heterooligomeric complex with CAV2 that targets to lipid rafts and drives caveolae formation. Mediates the recruitment of CAVIN proteins (CAVIN1/2/3/4) to the caveolae. Interacts directly with G-protein alpha subunits and can functionally regulate their activity. Involved in the costimulatory signal essential for T-cell receptor (TCR)-mediated T-cell activation. Its binding to DPP4 induces T-cell proliferation and NF-kappa-B activation in a T-cell receptor/CD3-dependent manner. Recruits CTNNB1 to caveolar membranes and may regulate CTNNB1-mediated signaling through the Wnt pathway. Negatively regulates TGFB1-mediated activation of SMAD2/3 by mediating the internalization of TGFBR1 from membrane rafts leading to its subsequent degradation. Binds 20(S)-hydroxycholesterol (20(S)-OHC). The polypeptide is Caveolin-1 (CAV1) (Eulemur macaco macaco (Black lemur)).